The following is a 231-amino-acid chain: DNA mismatch repair protein MutH (231 aa).

Belongs to the MutH family.

Its subcellular location is the cytoplasm. In terms of biological role, sequence-specific endonuclease that cleaves unmethylated GATC sequences. It is involved in DNA mismatch repair. This chain is DNA mismatch repair protein MutH, found in Salmonella paratyphi A (strain ATCC 9150 / SARB42).